The primary structure comprises 251 residues: MSEATALSPAEFEQALRAKGAYYHIYHPYHVAMYEGRATREQIQGWVANRFYYQVNIPLKDAAILANCPDREIRREWIQRLLDHDGAPGEDGGIEAWLRLGQAVGLDPDQLRSQELVLPGVRFAVDAYVNFARRANWQEAASSSLTELFAPQIHQSRLDSWPQHYPWIDPAGYEYFRTRLGQARRDVEHGLAITLQHYTTYEGQQRMLEILQFKLDILWSMLDAMSMAYELNRPPYHSVTDQKVWHKGITL.

It belongs to the PqqC family.

It catalyses the reaction 6-(2-amino-2-carboxyethyl)-7,8-dioxo-1,2,3,4,7,8-hexahydroquinoline-2,4-dicarboxylate + 3 O2 = pyrroloquinoline quinone + 2 H2O2 + 2 H2O + H(+). It functions in the pathway cofactor biosynthesis; pyrroloquinoline quinone biosynthesis. Ring cyclization and eight-electron oxidation of 3a-(2-amino-2-carboxyethyl)-4,5-dioxo-4,5,6,7,8,9-hexahydroquinoline-7,9-dicarboxylic-acid to PQQ. In Pseudomonas savastanoi pv. phaseolicola (strain 1448A / Race 6) (Pseudomonas syringae pv. phaseolicola (strain 1448A / Race 6)), this protein is Pyrroloquinoline-quinone synthase.